The chain runs to 831 residues: Replication restart protein PriA (831 aa).

A Helicase ATP-binding domain is found at 304–471; that stretch reads VLPLQGYHQV…HRHQNDPQRH (168 aa). 317–324 contacts ATP; that stretch reads GVTGSGKT. A DEAH box motif is present at residues 413–416; it reads DEEH. Residues Cys537, Cys540, Cys546, Cys549, Cys568, Cys571, Cys581, and Cys584 each coordinate Zn(2+). The region spanning 575–735 is the Helicase C-terminal domain; sequence EIQPKVCPEC…ELPQREMLNY (161 aa).

It belongs to the helicase family. PriA subfamily. As to quaternary structure, component of the replication restart primosome. The cofactor is Zn(2+).

It catalyses the reaction Couples ATP hydrolysis with the unwinding of duplex DNA by translocating in the 3'-5' direction.. The enzyme catalyses ATP + H2O = ADP + phosphate + H(+). Its function is as follows. Initiates the restart of stalled replication forks, which reloads the replicative helicase on sites other than the origin of replication. Recognizes and binds to abandoned replication forks and remodels them to uncover a helicase loading site. Promotes assembly of the primosome at these replication forks. The sequence is that of Replication restart protein PriA from Synechocystis sp. (strain ATCC 27184 / PCC 6803 / Kazusa).